The primary structure comprises 1184 residues: DNA-directed RNA polymerase subunit beta (1184 aa).

The segment at 1160–1184 is disordered; that stretch reads DDDFTNQNDAFNIVQPENAATEKTE.

It belongs to the RNA polymerase beta chain family. The RNAP catalytic core consists of 2 alpha, 1 beta, 1 beta' and 1 omega subunit. When a sigma factor is associated with the core the holoenzyme is formed, which can initiate transcription.

The enzyme catalyses RNA(n) + a ribonucleoside 5'-triphosphate = RNA(n+1) + diphosphate. DNA-dependent RNA polymerase catalyzes the transcription of DNA into RNA using the four ribonucleoside triphosphates as substrates. The sequence is that of DNA-directed RNA polymerase subunit beta from Listeria innocua serovar 6a (strain ATCC BAA-680 / CLIP 11262).